Consider the following 205-residue polypeptide: Probable GTP-binding protein EngB (205 aa).

The 175-residue stretch at 29 to 203 (QGAEIAFIGR…KAVLSQWFRS (175 aa)) folds into the EngB-type G domain. Residues 37–44 (GRSNAGKS), 64–68 (GRTQM), 82–85 (DLPG), 149–152 (TKSD), and 182–184 (FSS) each bind GTP. Mg(2+) contacts are provided by Ser-44 and Thr-66.

The protein belongs to the TRAFAC class TrmE-Era-EngA-EngB-Septin-like GTPase superfamily. EngB GTPase family. Mg(2+) serves as cofactor.

Its function is as follows. Necessary for normal cell division and for the maintenance of normal septation. The sequence is that of Probable GTP-binding protein EngB from Coxiella burnetii (strain CbuG_Q212) (Coxiella burnetii (strain Q212)).